We begin with the raw amino-acid sequence, 636 residues long: Endoglucanase 4 (636 aa).

The signal sequence occupies residues 1-25; the sequence is MTRRWSFLVQCFTFKKKEGVRSRYM. The active-site Nucleophile is the Asp82. Residues His400, Asp438, and Glu447 contribute to the active site. One can recognise a CBM3 domain in the interval 478 to 635; sequence KVEDEFFVEA…GDLVFGTLPN (158 aa).

It belongs to the glycosyl hydrolase 9 (cellulase E) family.

It localises to the secreted. It catalyses the reaction Endohydrolysis of (1-&gt;4)-beta-D-glucosidic linkages in cellulose, lichenin and cereal beta-D-glucans.. The protein is Endoglucanase 4 of Bacillus sp. (strain KSM-522).